The primary structure comprises 213 residues: 3,4-dihydroxy-2-butanone 4-phosphate synthase (213 aa).

D-ribulose 5-phosphate-binding positions include R37 to E38, D42, R150 to T154, and E174. Residue E38 participates in Mg(2+) binding. Position 153 (H153) interacts with Mg(2+).

This sequence belongs to the DHBP synthase family. Homodimer. Mg(2+) is required as a cofactor. The cofactor is Mn(2+).

The enzyme catalyses D-ribulose 5-phosphate = (2S)-2-hydroxy-3-oxobutyl phosphate + formate + H(+). Its pathway is cofactor biosynthesis; riboflavin biosynthesis; 2-hydroxy-3-oxobutyl phosphate from D-ribulose 5-phosphate: step 1/1. Catalyzes the conversion of D-ribulose 5-phosphate to formate and 3,4-dihydroxy-2-butanone 4-phosphate. In Clostridium botulinum (strain ATCC 19397 / Type A), this protein is 3,4-dihydroxy-2-butanone 4-phosphate synthase.